Consider the following 617-residue polypeptide: Zinc metalloproteinase nas-36 (617 aa).

The first 22 residues, 1-22, serve as a signal peptide directing secretion; it reads MRLCHSIILFNSLISISICSKA. A propeptide spanning residues 23–126 is cleaved from the precursor; that stretch reads DDPALLVASE…SKDKTKRLRR (104 aa). Residues 127–322 form the Peptidase M12A domain; that stretch reads SFVSDKTATW…VATINTAYCK (196 aa). Intrachain disulfides connect Cys-169–Cys-321, Cys-192–Cys-211, Cys-325–Cys-346, Cys-348–Cys-357, Cys-368–Cys-397, Cys-425–Cys-445, Cys-519–Cys-550, Cys-523–Cys-555, and Cys-535–Cys-540. N-linked (GlcNAc...) asparagine glycosylation occurs at Asn-174. Position 219 (His-219) interacts with Zn(2+). Residue Glu-220 is part of the active site. Zn(2+)-binding residues include His-223 and His-229. Positions 317–358 constitute an EGF-like domain; that stretch reads NTAYCKDECKSEKTKCENGGYMRPSKCSECLCPDGLGGEKCE. The region spanning 368–482 is the CUB domain; the sequence is CGGIIKLTEE…IGFKIQAKST (115 aa). The TSP type-1 domain occupies 507–556; sequence PNVWADWGEWSMCSRTCGGCGIRSRVRSCRSKKCEGRRQEFGTCNLKACP.

Zn(2+) serves as cofactor. Expressed in hypodermal cells. Also detected in the hypodermal seam cells in L4 larvae and young adults. In old adult hermaphrodites, it localizes to the vulva (at protein level).

The protein resides in the secreted. In terms of biological role, metalloprotease. Involved in molting, a process during larval stages in which a new cuticle is formed and the old cuticle is shed. This Caenorhabditis elegans protein is Zinc metalloproteinase nas-36 (nas-36).